A 513-amino-acid polypeptide reads, in one-letter code: ATP synthase subunit alpha (513 aa).

169-176 (GDRQTGKT) contacts ATP.

Belongs to the ATPase alpha/beta chains family. In terms of assembly, F-type ATPases have 2 components, CF(1) - the catalytic core - and CF(0) - the membrane proton channel. CF(1) has five subunits: alpha(3), beta(3), gamma(1), delta(1), epsilon(1). CF(0) has three main subunits: a(1), b(2) and c(9-12). The alpha and beta chains form an alternating ring which encloses part of the gamma chain. CF(1) is attached to CF(0) by a central stalk formed by the gamma and epsilon chains, while a peripheral stalk is formed by the delta and b chains.

It is found in the cell inner membrane. It catalyses the reaction ATP + H2O + 4 H(+)(in) = ADP + phosphate + 5 H(+)(out). Produces ATP from ADP in the presence of a proton gradient across the membrane. The alpha chain is a regulatory subunit. The protein is ATP synthase subunit alpha of Shewanella baltica (strain OS223).